The chain runs to 116 residues: Large ribosomal subunit protein uL24 (116 aa).

Residues 1-21 form a disordered region; it reads MATNNGAGKARHKFHVKKGDT.

This sequence belongs to the universal ribosomal protein uL24 family. Part of the 50S ribosomal subunit.

Functionally, one of two assembly initiator proteins, it binds directly to the 5'-end of the 23S rRNA, where it nucleates assembly of the 50S subunit. Its function is as follows. One of the proteins that surrounds the polypeptide exit tunnel on the outside of the subunit. The polypeptide is Large ribosomal subunit protein uL24 (Gloeobacter violaceus (strain ATCC 29082 / PCC 7421)).